The primary structure comprises 138 residues: FUN14 domain-containing protein fndc-1 (138 aa).

Helical transmembrane passes span 37–56 and 61–78; these read PMVQLGVGAGFGTVTGYFVT and LVAATVGISFLLAQFAIH. N-linked (GlcNAc...) asparagine glycans are attached at residues N85 and N111.

This sequence belongs to the FUN14 family. In terms of tissue distribution, broadly expressed in somatic tissues. Expressed in the hermaphrodite spermatheca and male gonad. Expressed in spermatids, but not expressed in oocytes.

It is found in the mitochondrion outer membrane. In terms of biological role, mitophagy receptor which plays a role in paternal mitochondria degradation in embryos after the two-cell stage. The chain is FUN14 domain-containing protein fndc-1 from Caenorhabditis elegans.